The chain runs to 856 residues: DNA mismatch repair protein MutS (856 aa).

605–612 (GPNMSGKS) contacts ATP.

It belongs to the DNA mismatch repair MutS family.

In terms of biological role, this protein is involved in the repair of mismatches in DNA. It is possible that it carries out the mismatch recognition step. This protein has a weak ATPase activity. The protein is DNA mismatch repair protein MutS of Lysinibacillus sphaericus (strain C3-41).